Reading from the N-terminus, the 135-residue chain is Large ribosomal subunit protein eL32 (135 aa).

K9 participates in a covalent cross-link: Glycyl lysine isopeptide (Lys-Gly) (interchain with G-Cter in SUMO2). K50 bears the N6-succinyllysine mark. A Phosphoserine modification is found at S62.

The protein belongs to the eukaryotic ribosomal protein eL32 family. Component of the large ribosomal subunit.

The protein resides in the cytoplasm. Component of the large ribosomal subunit. The ribosome is a large ribonucleoprotein complex responsible for the synthesis of proteins in the cell. This Macaca fascicularis (Crab-eating macaque) protein is Large ribosomal subunit protein eL32 (RPL32).